We begin with the raw amino-acid sequence, 217 residues long: Peptide methionine sulfoxide reductase MsrA 1 (217 aa).

The active site involves cysteine 54.

It belongs to the MsrA Met sulfoxide reductase family.

The enzyme catalyses L-methionyl-[protein] + [thioredoxin]-disulfide + H2O = L-methionyl-(S)-S-oxide-[protein] + [thioredoxin]-dithiol. The catalysed reaction is [thioredoxin]-disulfide + L-methionine + H2O = L-methionine (S)-S-oxide + [thioredoxin]-dithiol. Has an important function as a repair enzyme for proteins that have been inactivated by oxidation. Catalyzes the reversible oxidation-reduction of methionine sulfoxide in proteins to methionine. The polypeptide is Peptide methionine sulfoxide reductase MsrA 1 (msrA1) (Caulobacter vibrioides (strain ATCC 19089 / CIP 103742 / CB 15) (Caulobacter crescentus)).